A 276-amino-acid polypeptide reads, in one-letter code: MPELPEVHTIVQDLKQSRLIGKKIISTEIFWPKTLAVPTPEIFCQQVQGQSIQNVDRRGKYIIFQLSNQMFLIVHLRMTGRFQFVTSQTPASPYVRIQFNFENGDQLRFHDTRKFGRWYLVSDVEEIIGHLGPEPLLSSFTFELFEDMMKNRKTLLKSLLLDQSFIVGLGNIYVDEALWEAKLHPLIPANQINLKHLKILYHSIKYVLEKGIQARGTTLGPGRTHYYRLDGSKGEHQTLLNVFRKTGHPCPRCGHLIEKLIVAQRSTHICPICQKK.

Pro-2 (schiff-base intermediate with DNA) is an active-site residue. The active-site Proton donor is Glu-3. Lys-60 serves as the catalytic Proton donor; for beta-elimination activity. DNA contacts are provided by Arg-113 and Arg-152. Residues 241 to 275 form an FPG-type zinc finger; sequence NVFRKTGHPCPRCGHLIEKLIVAQRSTHICPICQK. The active-site Proton donor; for delta-elimination activity is the Arg-265.

Belongs to the FPG family. As to quaternary structure, monomer. Zn(2+) serves as cofactor.

The enzyme catalyses Hydrolysis of DNA containing ring-opened 7-methylguanine residues, releasing 2,6-diamino-4-hydroxy-5-(N-methyl)formamidopyrimidine.. It carries out the reaction 2'-deoxyribonucleotide-(2'-deoxyribose 5'-phosphate)-2'-deoxyribonucleotide-DNA = a 3'-end 2'-deoxyribonucleotide-(2,3-dehydro-2,3-deoxyribose 5'-phosphate)-DNA + a 5'-end 5'-phospho-2'-deoxyribonucleoside-DNA + H(+). In terms of biological role, involved in base excision repair of DNA damaged by oxidation or by mutagenic agents. Acts as a DNA glycosylase that recognizes and removes damaged bases. Has a preference for oxidized purines, such as 7,8-dihydro-8-oxoguanine (8-oxoG). Has AP (apurinic/apyrimidinic) lyase activity and introduces nicks in the DNA strand. Cleaves the DNA backbone by beta-delta elimination to generate a single-strand break at the site of the removed base with both 3'- and 5'-phosphates. In Protochlamydia amoebophila (strain UWE25), this protein is Formamidopyrimidine-DNA glycosylase.